The primary structure comprises 199 residues: MYDFLRFFPENLPDLGFKSYVFMLEKPKGCGIVIRANSPEELRKKLRGVKRRAIVGIIGKEAVCREAVMRRRVDVILDWEDRELDYATLKLAAEKDVAIELSLSKFLRTEGYKRMHLFERLRQEIMVIRKFDVPFIVTTAAENQYELRTRKQVETFFKFFGAEIPKARLYAQRLVRRYFDENYIMDGFEVEQLSNSGVV.

This sequence belongs to the eukaryotic/archaeal RNase P protein component 3 family. In terms of assembly, consists of a catalytic RNA component and at least 4-5 protein subunits.

The protein localises to the cytoplasm. The enzyme catalyses Endonucleolytic cleavage of RNA, removing 5'-extranucleotides from tRNA precursor.. Functionally, part of ribonuclease P, a protein complex that generates mature tRNA molecules by cleaving their 5'-ends. The protein is Ribonuclease P protein component 3 of Archaeoglobus fulgidus (strain ATCC 49558 / DSM 4304 / JCM 9628 / NBRC 100126 / VC-16).